The chain runs to 376 residues: Lipoyl synthase, mitochondrial (376 aa).

Positions 102, 107, 113, 133, 137, 140, and 348 each coordinate [4Fe-4S] cluster. One can recognise a Radical SAM core domain in the interval 116-337 (GGEDKTATAT…EEVGGEMGFA (222 aa)).

The protein belongs to the radical SAM superfamily. Lipoyl synthase family. [4Fe-4S] cluster serves as cofactor.

It localises to the mitochondrion. It catalyses the reaction [[Fe-S] cluster scaffold protein carrying a second [4Fe-4S](2+) cluster] + N(6)-octanoyl-L-lysyl-[protein] + 2 oxidized [2Fe-2S]-[ferredoxin] + 2 S-adenosyl-L-methionine + 4 H(+) = [[Fe-S] cluster scaffold protein] + N(6)-[(R)-dihydrolipoyl]-L-lysyl-[protein] + 4 Fe(3+) + 2 hydrogen sulfide + 2 5'-deoxyadenosine + 2 L-methionine + 2 reduced [2Fe-2S]-[ferredoxin]. It participates in protein modification; protein lipoylation via endogenous pathway; protein N(6)-(lipoyl)lysine from octanoyl-[acyl-carrier-protein]: step 2/2. Functionally, catalyzes the radical-mediated insertion of two sulfur atoms into the C-6 and C-8 positions of the octanoyl moiety bound to the lipoyl domains of lipoate-dependent enzymes, thereby converting the octanoylated domains into lipoylated derivatives. This is Lipoyl synthase, mitochondrial from Branchiostoma floridae (Florida lancelet).